Reading from the N-terminus, the 164-residue chain is Glutamate uptake regulatory protein (164 aa).

The HTH asnC-type domain occupies 5-66 (LDDFDIKILD…LLDPQKIGLG (62 aa)). The H-T-H motif DNA-binding region spans 24–43 (MAELSEKTGLSANACWRRIR).

In terms of biological role, represses the secondary, H(+)-coupled glutamate uptake system (Gluemp) genes. The protein is Glutamate uptake regulatory protein (grp) of Zymomonas mobilis subsp. mobilis (strain ATCC 31821 / ZM4 / CP4).